Consider the following 219-residue polypeptide: UPF0502 protein Gmet_0262 (219 aa).

Belongs to the UPF0502 family.

This is UPF0502 protein Gmet_0262 from Geobacter metallireducens (strain ATCC 53774 / DSM 7210 / GS-15).